We begin with the raw amino-acid sequence, 355 residues long: Adenine deaminase (355 aa).

His-24, His-26, and His-204 together coordinate Zn(2+). The active-site Proton donor is the Glu-207. Asp-285 is a Zn(2+) binding site. Asp-286 contributes to the substrate binding site.

Belongs to the metallo-dependent hydrolases superfamily. Adenosine and AMP deaminases family. Adenine deaminase type 2 subfamily. The cofactor is Zn(2+).

The catalysed reaction is adenine + H2O + H(+) = hypoxanthine + NH4(+). Catalyzes the hydrolytic deamination of adenine to hypoxanthine. Plays an important role in the purine salvage pathway and in nitrogen catabolism. This chain is Adenine deaminase, found in Geotalea uraniireducens (strain Rf4) (Geobacter uraniireducens).